Consider the following 90-residue polypeptide: Acylphosphatase (90 aa).

The Acylphosphatase-like domain occupies 5–90 (CLKAWVTGRV…DPPPGTFELG (86 aa)). Catalysis depends on residues R20 and N38.

It belongs to the acylphosphatase family.

The catalysed reaction is an acyl phosphate + H2O = a carboxylate + phosphate + H(+). In Chromohalobacter salexigens (strain ATCC BAA-138 / DSM 3043 / CIP 106854 / NCIMB 13768 / 1H11), this protein is Acylphosphatase (acyP).